Reading from the N-terminus, the 127-residue chain is Fluoride-specific ion channel FluC (127 aa).

The next 4 helical transmembrane spans lie at 4–24 (LLLA…LLSM), 35–55 (LGTL…FAWF), 71–91 (TGFC…VFLL), and 103–123 (VFVN…LFSA). The Na(+) site is built by Gly-75 and Thr-78.

The protein belongs to the fluoride channel Fluc/FEX (TC 1.A.43) family.

It is found in the cell inner membrane. The enzyme catalyses fluoride(in) = fluoride(out). Na(+) is not transported, but it plays an essential structural role and its presence is essential for fluoride channel function. Its function is as follows. Fluoride-specific ion channel. Important for reducing fluoride concentration in the cell, thus reducing its toxicity. The polypeptide is Fluoride-specific ion channel FluC (Shigella flexneri serotype 5b (strain 8401)).